The chain runs to 857 residues: DNA mismatch repair protein MutS (857 aa).

613–620 (GPNMGGKS) is a binding site for ATP. The interval 797-820 (TSLPHEQPAAHKAKDAPQVPHQSD) is disordered.

Belongs to the DNA mismatch repair MutS family.

Its function is as follows. This protein is involved in the repair of mismatches in DNA. It is possible that it carries out the mismatch recognition step. This protein has a weak ATPase activity. The polypeptide is DNA mismatch repair protein MutS (Pseudomonas putida (strain ATCC 700007 / DSM 6899 / JCM 31910 / BCRC 17059 / LMG 24140 / F1)).